The chain runs to 310 residues: p-hydroxybenzoic acid efflux pump subunit AaeA (310 aa).

A helical membrane pass occupies residues 12 to 32; sequence AITLVLVILAFIAIFRAWVYY.

Belongs to the membrane fusion protein (MFP) (TC 8.A.1) family.

The protein localises to the cell inner membrane. Functionally, forms an efflux pump with AaeB. This chain is p-hydroxybenzoic acid efflux pump subunit AaeA, found in Salmonella schwarzengrund (strain CVM19633).